Consider the following 400-residue polypeptide: Outer membrane protein alpha (400 aa).

The N-terminal stretch at 1-20 (MKRVLLTVAMLSVFFSAMFA) is a signal peptide. One can recognise an SLH domain in the interval 21–81 (FFPDVPKDHW…DFIEQKMLAG (61 aa)). A coiled-coil region spans residues 85–379 (DLAQVVGNLS…ESVKAYNRNL (295 aa)). Repeat copies occupy residues 208-232 (VNLHEKDIINIYNKISSVNEELNNK), 251-275 (VELHEKDIINLYNKVAALNEDLNKK), and 326-350 (VDLHEQDIVNLYGKTSSLEEDLNMK). The 3 X 25 AA approximate repeat stretch occupies residues 208–350 (VNLHEKDIIN…SSLEEDLNMK (143 aa)). Residues 380–400 (SILTGAFFGILGLILIAISGK) form a helical membrane-spanning segment.

In terms of assembly, homotetramer.

It localises to the cell outer membrane. In terms of biological role, links the outer membrane to the inner membrane. Long fibrous protein that could serve to separate the two membranes. The chain is Outer membrane protein alpha (omp-alpha) from Thermotoga maritima (strain ATCC 43589 / DSM 3109 / JCM 10099 / NBRC 100826 / MSB8).